A 689-amino-acid polypeptide reads, in one-letter code: Glycine--tRNA ligase beta subunit (689 aa).

It belongs to the class-II aminoacyl-tRNA synthetase family. Tetramer of two alpha and two beta subunits.

The protein resides in the cytoplasm. The catalysed reaction is tRNA(Gly) + glycine + ATP = glycyl-tRNA(Gly) + AMP + diphosphate. The polypeptide is Glycine--tRNA ligase beta subunit (Shigella flexneri serotype 5b (strain 8401)).